Here is a 119-residue protein sequence, read N- to C-terminus: Phospholipase A2 A2-actitoxin-Cgg2a (119 aa).

Cystine bridges form between cysteine 25–cysteine 119, cysteine 27–cysteine 43, cysteine 42–cysteine 101, cysteine 49–cysteine 94, cysteine 61–cysteine 87, and cysteine 78–cysteine 92. Ca(2+) is bound by residues glycine 28 and glycine 30. Histidine 46 is a catalytic residue. Aspartate 47 lines the Ca(2+) pocket. Residue aspartate 95 is part of the active site.

This sequence belongs to the phospholipase A2 family. As to quaternary structure, homodimer. Ca(2+) is required as a cofactor.

The protein resides in the secreted. Its subcellular location is the nematocyst. The catalysed reaction is a 1,2-diacyl-sn-glycero-3-phosphocholine + H2O = a 1-acyl-sn-glycero-3-phosphocholine + a fatty acid + H(+). Functionally, sea anemone phospholipase A2 (PLA2). When incubated with plasma, this protein shows a moderate anticoagulant activity (0.15 ug of enzyme/200 uL of plasma), inhibiting clotting induced by thrombin. This enzyme also induces myotoxicity, and edema. PLA2 catalyzes the calcium-dependent hydrolysis of the 2-acyl groups in 3-sn-phosphoglycerides. The protein is Phospholipase A2 A2-actitoxin-Cgg2a of Condylactis gigantea (Giant Caribbean anemone).